The chain runs to 596 residues: Signal peptide peptidase-like 2B (596 aa).

The signal sequence occupies residues 1 to 21; that stretch reads MAARWAQFLLFSLLSLPQVYC. Over 22–170 the chain is Lumenal; the sequence is EYGMVHVLSE…APNEPVLDYN (149 aa). In terms of domain architecture, PA spans 53 to 147; the sequence is HDLGKASLLQ…LLSYSDMLDI (95 aa). N-linked (GlcNAc...) asparagine glycosylation is present at asparagine 93. A helical membrane pass occupies residues 171-191; it reads MVIIFVMAVGTVAIGGYWAGS. The Cytoplasmic segment spans residues 192–219; that stretch reads RDVKERYMKHKRDDGAEKHEDETVDVTP. Residues 220-240 traverse the membrane as a helical segment; it reads IMICVFVVMCCSMLVLLYFFY. Topologically, residues 241 to 242 are lumenal; sequence DH. Residues 243–263 form a helical membrane-spanning segment; that stretch reads LVYVIIGIFCLAASIGLYSCL. Residues 264–289 are Cytoplasmic-facing; it reads SPFVRRFPLGKCRIPDNNLPYFHKRP. A helical membrane pass occupies residues 290 to 310; the sequence is QVRILLLAVFCISVSVVWGVF. Topologically, residues 311–315 are lumenal; it reads RNEDQ. The helical transmembrane segment at 316–336 threads the bilayer; sequence WAWVLQDALGIAFCLYMLKTI. Residues 337-344 lie on the Cytoplasmic side of the membrane; sequence RLPTFKGC. Residues 345–365 form a helical membrane-spanning segment; that stretch reads TLLLLVLFVYDVFFVFITPFL. Aspartate 355 is an active-site residue. The Lumenal segment spans residues 366–408; the sequence is TKTGESIMVEVAAGPSDSATHEKLPMVLKVPRLNSSPLALCDR. Residues 409-429 form a helical membrane-spanning segment; the sequence is PFSLLGFGDILVPGLLVAYCH. Residue aspartate 417 is part of the active site. The Cytoplasmic portion of the chain corresponds to 430–441; it reads RFDIQVQSSRVY. The helical transmembrane segment at 442-462 threads the bilayer; it reads FVACTIAYGIGLLVTFVALAL. Residues 463–466 lie on the Lumenal side of the membrane; sequence MQMG. A helical transmembrane segment spans residues 467–487; it reads QPALLYLVPCTLITSFSVALW. Positions 468–470 match the PAL motif; that stretch reads PAL. Residues 488 to 596 lie on the Cytoplasmic side of the membrane; it reads RKELAMFWTG…SLNLEQKQLE (109 aa). Positions 543–596 are disordered; sequence KELHSPTLAAEEPADNDTKTEQSEVSIAQSEEAAGHNKDDLESKSLNLEQKQLE. A compositionally biased stretch (basic and acidic residues) spans 575–585; it reads AAGHNKDDLES. Residues 586-596 show a composition bias toward polar residues; that stretch reads KSLNLEQKQLE.

Belongs to the peptidase A22B family.

It is found in the cell membrane. Its subcellular location is the golgi apparatus membrane. The protein resides in the lysosome membrane. The protein localises to the endosome membrane. It localises to the membrane. In terms of biological role, intramembrane-cleaving aspartic protease (I-CLiP) that cleaves type II membrane signal peptides in the hydrophobic plane of the membrane. The protein is Signal peptide peptidase-like 2B of Gallus gallus (Chicken).